We begin with the raw amino-acid sequence, 1179 residues long: Putative ankyrin repeat protein RF_0381 (1179 aa).

ANK repeat units lie at residues 282-311 (NGYQSIHLVISGGNKGNIELQIRSTTMHRQ), 604-633 (NKDQLLRLGLQLGCVESVPLLITHGANPNA), 637-666 (HGVISLHCAAKNGNLDLAKLLAKNGADVNA), 670-699 (NGETVLHYAVKSGNLHLVKWLIENQANIHA), 703-732 (NGETVLHYAVSFNNSDLVYLLIAYGADVNA), 736-765 (NGLTALHYAVYDGNLDLVSLLISHGADVNA), 769-798 (SGETILYSAVDYGSPDLVYLLIAYGADVNA), 802-831 (NGETVLHYAVESGNLDLVSLLIHNGANVNN), 833-860 (KTILHFAAKSGNLNLVNWLIKNKADIHA), 864-893 (SGETILHFAAESGNLNLVNWLIKNKADIHA), 897-926 (SGETILHFAAKSGNLNLVNWLIKNKADIHA), 930-959 (SGETILHFAAKSGNLNLVNWLIKNKADIHA), 963-992 (SGETILHFAAESGNLNLVSLLIHNGTDINT), 996-1025 (DGLTALHYAVESGNLNLVSLLIHKGIDVNA), 1029-1058 (SGETILHFAVDLGSLDLVSLLMVRGADVNA), 1062-1091 (DGLTALHYAVESDNLALVSLLMVYGADVNA), 1095-1124 (SGETPLHYAVIFNSLDLVSLLIHNGADINT), and 1128-1157 (SGETVLNSIMEFNNCNILKSFILGGADINL).

This Rickettsia felis (strain ATCC VR-1525 / URRWXCal2) (Rickettsia azadi) protein is Putative ankyrin repeat protein RF_0381.